We begin with the raw amino-acid sequence, 209 residues long: Ribosomal RNA large subunit methyltransferase E (209 aa).

Positions 63, 65, 83, 99, and 124 each coordinate S-adenosyl-L-methionine. Catalysis depends on Lys164, which acts as the Proton acceptor.

The protein belongs to the class I-like SAM-binding methyltransferase superfamily. RNA methyltransferase RlmE family.

It is found in the cytoplasm. The enzyme catalyses uridine(2552) in 23S rRNA + S-adenosyl-L-methionine = 2'-O-methyluridine(2552) in 23S rRNA + S-adenosyl-L-homocysteine + H(+). Functionally, specifically methylates the uridine in position 2552 of 23S rRNA at the 2'-O position of the ribose in the fully assembled 50S ribosomal subunit. The sequence is that of Ribosomal RNA large subunit methyltransferase E from Photorhabdus laumondii subsp. laumondii (strain DSM 15139 / CIP 105565 / TT01) (Photorhabdus luminescens subsp. laumondii).